Reading from the N-terminus, the 155-residue chain is MENNRAGRPKSCRRVKEMPKVRCFKPQGIPGIKLEEMVLSVDEMESLRLADLEGLYQSEAARRMDVSRQTFGRIIDSAHRKVADAIIHGKSIVIEGGVVMKREEQVHNAKPGCVCQHCGHEESHRSGLPCRDMICPECGHHMIRKGGCGTGQEDI.

It belongs to the UPF0251 family.

The polypeptide is UPF0251 protein Paes_1249 (Prosthecochloris aestuarii (strain DSM 271 / SK 413)).